Reading from the N-terminus, the 1692-residue chain is Adenylate cyclase (1692 aa).

Disordered regions lie at residues 1–22 (MDQSKRLLKSAVPNPPEHFKTG) and 103–142 (SLSDTGRTKSDTALAARESSEKSEVPRDTRSAGIKPYKEN). A compositionally biased stretch (basic and acidic residues) spans 120–132 (ESSEKSEVPRDTR). The required for interaction with gpa2 stretch occupies residues 174–195 (FTNLTFPEPISDDSDSVEFQRD). Residues 292 to 380 (KEFFLRVYRD…SDEEINEEDN (89 aa)) enclose the Ras-associating domain. LRR repeat units follow at residues 430 to 450 (ELISLNVSHNLSLDLPLDFME), 454 to 474 (KLKRLDISNNLRSPRGKPITA), 477 to 498 (QLEVLNMSRNDIYELDPLIFSG), 503 to 524 (SLKELNIANNKLFFLPHSTRYL), 526 to 547 (NLTYLDLSYNNFVTFPLIITEL), 549 to 570 (QLETLNFSHNLLSQISSKIGSL), 572 to 594 (KLKHLYLQFNDLSNRLPQEIGLL), 596 to 617 (NLETIDLSYNAITNIASLSECP), 618 to 639 (KLNSINVACNLLSFYEYSNPSA), 660 to 681 (NLVYFDISHAKLIGLKDSVIET), 684 to 705 (NVETVKVNYNHFTSISDAISAM), 707 to 729 (NLKYLSCTNCEMSYVSPNLGKLK), 730 to 751 (HLVHLDLHANNIKIFPEEVWQV), 753 to 774 (SLKVVNLSSNILEKIKLPVATS), 783 to 805 (QLKIMRTLSGNPVSSLSSQEFVM), 807 to 827 (TVEELYLVDNRLGNDCFTALE), 831 to 852 (CLKVLNLSYNYLTEIPSKFFQN), 855 to 876 (DLKHLFVSGNELANLSISSTAQ), 878 to 899 (LLETLYANGNRLSSFPKNEALS), 901 to 922 (SLRFLDISTNNLQNLAVEKAEK), and 930 to 951 (QLEYLNLSGNTWFRFSEHEDTN). In terms of domain architecture, PPM-type phosphatase spans 995–1275 (RYGVCGYLSR…KNVLVVIVEL (281 aa)). In terms of domain architecture, Guanylate cyclase spans 1332 to 1469 (AMVFTDIKNS…PVVNRTSRVV (138 aa)). Mg(2+) contacts are provided by Asp1337 and Asp1380. Mn(2+) is bound by residues Asp1337 and Asp1380. Residues 1585–1597 (SDSKSVHGEEGGS) show a composition bias toward basic and acidic residues. Positions 1585–1614 (SDSKSVHGEEGGSGKRSVSSLRNVSPSEST) are disordered. A compositionally biased stretch (polar residues) spans 1600 to 1614 (RSVSSLRNVSPSEST).

The protein belongs to the adenylyl cyclase class-3 family. In terms of assembly, interacts (via N-terminus) with gpa2; the interaction is direct and serves to activate adenylate cyclase and cAMP-PKA signaling, to repress sexual development and gluconeogenesis. Interacts with git1. Requires Mn(2+) as cofactor.

It localises to the cytoplasm. The catalysed reaction is ATP = 3',5'-cyclic AMP + diphosphate. Its activity is regulated as follows. Activated by binding G protein gpa2. Activated by git1. In contrast to yeast cyclase, S.pombe cyclase is not likely to be regulated by RAS proteins. Acts in glucose-induced cAMP signaling by catalyzing the synthesis of the second messenger, cAMP to activate PKA signaling and repress sexual development and gluconeogenesis. This Schizosaccharomyces pombe (strain 972 / ATCC 24843) (Fission yeast) protein is Adenylate cyclase.